The primary structure comprises 572 residues: Proline--tRNA ligase (572 aa).

This sequence belongs to the class-II aminoacyl-tRNA synthetase family. ProS type 1 subfamily. Homodimer.

Its subcellular location is the cytoplasm. The enzyme catalyses tRNA(Pro) + L-proline + ATP = L-prolyl-tRNA(Pro) + AMP + diphosphate. Catalyzes the attachment of proline to tRNA(Pro) in a two-step reaction: proline is first activated by ATP to form Pro-AMP and then transferred to the acceptor end of tRNA(Pro). As ProRS can inadvertently accommodate and process non-cognate amino acids such as alanine and cysteine, to avoid such errors it has two additional distinct editing activities against alanine. One activity is designated as 'pretransfer' editing and involves the tRNA(Pro)-independent hydrolysis of activated Ala-AMP. The other activity is designated 'posttransfer' editing and involves deacylation of mischarged Ala-tRNA(Pro). The misacylated Cys-tRNA(Pro) is not edited by ProRS. This Haemophilus influenzae (strain PittGG) protein is Proline--tRNA ligase.